Reading from the N-terminus, the 283-residue chain is MTDLTGILYIVATPIGNLQDITQRALETFAQVDLIAAEDTRHSGLLLSHYGIKKPFFALHDHNEQEKAHILVEKLKQGSNIALISDAGTPLISDPGFHLVRQCREAGIRVVPLPGACAAITALCASGIASDRFCFEGFLPAKSKARKDKLENIAEEDRTLIFYESTHRILDTLEDMQAVLGEERYIVLAREMTKTWETITGNTIKNLREWLLEDPNRTKGEMVLIVEGKPKSDNNDEISPQAVKALELIAEELPLKKAAAIVAELYGYKKNALYQFGLAHLEK.

The protein belongs to the methyltransferase superfamily. RsmI family.

The protein resides in the cytoplasm. It catalyses the reaction cytidine(1402) in 16S rRNA + S-adenosyl-L-methionine = 2'-O-methylcytidine(1402) in 16S rRNA + S-adenosyl-L-homocysteine + H(+). In terms of biological role, catalyzes the 2'-O-methylation of the ribose of cytidine 1402 (C1402) in 16S rRNA. The chain is Ribosomal RNA small subunit methyltransferase I from Haemophilus influenzae (strain ATCC 51907 / DSM 11121 / KW20 / Rd).